The sequence spans 129 residues: Small ribosomal subunit protein uS12 (129 aa).

Aspartate 89 bears the 3-methylthioaspartic acid mark. The segment at 110 to 129 (RKQGRSRYGAPRKQVVATKK) is disordered.

This sequence belongs to the universal ribosomal protein uS12 family. As to quaternary structure, part of the 30S ribosomal subunit. Contacts proteins S8 and S17. May interact with IF1 in the 30S initiation complex.

With S4 and S5 plays an important role in translational accuracy. Its function is as follows. Interacts with and stabilizes bases of the 16S rRNA that are involved in tRNA selection in the A site and with the mRNA backbone. Located at the interface of the 30S and 50S subunits, it traverses the body of the 30S subunit contacting proteins on the other side and probably holding the rRNA structure together. The combined cluster of proteins S8, S12 and S17 appears to hold together the shoulder and platform of the 30S subunit. The chain is Small ribosomal subunit protein uS12 from Rickettsia bellii (strain OSU 85-389).